A 406-amino-acid chain; its full sequence is Arginine deiminase (406 aa).

Cysteine 396 functions as the Amidino-cysteine intermediate in the catalytic mechanism.

This sequence belongs to the arginine deiminase family.

Its subcellular location is the cytoplasm. The enzyme catalyses L-arginine + H2O = L-citrulline + NH4(+). It functions in the pathway amino-acid degradation; L-arginine degradation via ADI pathway; carbamoyl phosphate from L-arginine: step 1/2. The chain is Arginine deiminase from Aliivibrio fischeri (strain MJ11) (Vibrio fischeri).